Reading from the N-terminus, the 516-residue chain is Signal recognition particle protein (516 aa).

GTP is bound by residues 108–115 (GLQGAGKT), 191–195 (DTAGR), and 249–252 (TKID). The segment at 383-405 (MTPEERENPDLLTPSRRRRIASG) is disordered.

This sequence belongs to the GTP-binding SRP family. SRP54 subfamily. Part of the signal recognition particle protein translocation system, which is composed of SRP and FtsY.

It localises to the cytoplasm. It carries out the reaction GTP + H2O = GDP + phosphate + H(+). In terms of biological role, involved in targeting and insertion of nascent membrane proteins into the cytoplasmic membrane. Binds to the hydrophobic signal sequence of the ribosome-nascent chain (RNC) as it emerges from the ribosomes. The SRP-RNC complex is then targeted to the cytoplasmic membrane where it interacts with the SRP receptor FtsY. The chain is Signal recognition particle protein from Streptococcus mutans serotype c (strain ATCC 700610 / UA159).